The chain runs to 555 residues: Spermine oxidase (555 aa).

Residues Ala-35, Glu-55, Arg-63, 79–80 (TW), and Val-261 contribute to the FAD site. Residues 271 to 307 (AHPRGPEIEPRGEGDHNHDTGEGGQSGENPQQGRWDE) are disordered. The span at 274–291 (RGPEIEPRGEGDHNHDTG) shows a compositional bias: basic and acidic residues. Residues Glu-519 and 528-529 (TT) each bind FAD.

It belongs to the flavin monoamine oxidase family. The cofactor is FAD. Widely expressed. Isoform 1 and isoform 2 are expressed at higher level in brain and skeletal muscle. Isoform 7 is found in brain and spleen, isoform 10 is widely expressed but found at lower level in heart, kidney, liver and lung.

It localises to the cytoplasm. The protein localises to the nucleus. It carries out the reaction spermine + O2 + H2O = 3-aminopropanal + spermidine + H2O2. Its pathway is amine and polyamine degradation; spermine degradation. In terms of biological role, flavoenzyme which catalyzes the oxidation of spermine to spermidine. Can also use N(1)-acetylspermine and spermidine as substrates, with different affinity depending on the isoform (isozyme) and on the experimental conditions. Plays an important role in the regulation of polyamine intracellular concentration and has the potential to act as a determinant of cellular sensitivity to the antitumor polyamine analogs. May contribute to beta-alanine production via aldehyde dehydrogenase conversion of 3-amino-propanal. This is Spermine oxidase (Smox) from Mus musculus (Mouse).